Consider the following 321-residue polypeptide: Anther-specific protein TA-29 (321 aa).

A disordered region spans residues 301 to 321 (RSDEEEAHHQSKQHKDEDIIN).

Anther specific (tapetal cells).

This chain is Anther-specific protein TA-29 (TA-29), found in Nicotiana tabacum (Common tobacco).